A 506-amino-acid polypeptide reads, in one-letter code: Tabersonine 16-hydroxylase 1 (506 aa).

The chain crosses the membrane as a helical span at residues 1 to 21 (MEFYYFLYLAFLLFCFILSKT). Residue Cys447 coordinates heme.

This sequence belongs to the cytochrome P450 family. Heme is required as a cofactor. As to expression, predominantly expressed in young leaves of mature plants. Low expression in roots and flowers, but not detected in stems and old leaves. Found predominantly in leaf epidermis. Barely detected in roots, internodes, young and mature leaves, and flower buds, but relatively abundant in fully developed flowers. Not detected in leaf epidermal cells.

It localises to the endoplasmic reticulum membrane. It catalyses the reaction (-)-tabersonine + reduced [NADPH--hemoprotein reductase] + O2 = 16-hydroxytabersonine + oxidized [NADPH--hemoprotein reductase] + H2O + H(+). It participates in alkaloid biosynthesis; vindoline biosynthesis. In terms of biological role, involved in the flower biosynthesis of vindoline, a precursor of vinblastine and vincristine. Hydroxylates specifically tabersonine, 2,3-dihydrotabersonine and 2,3-dihydro-3-hydroxytabersonine, but has no activity with naringenin, tryptamine, secologanin, strictosidine, ajmalicine, vindoline and catharanthine. This Catharanthus roseus (Madagascar periwinkle) protein is Tabersonine 16-hydroxylase 1.